The following is an 89-amino-acid chain: Small ribosomal subunit protein uS17 (89 aa).

It belongs to the universal ribosomal protein uS17 family. In terms of assembly, part of the 30S ribosomal subunit.

Its function is as follows. One of the primary rRNA binding proteins, it binds specifically to the 5'-end of 16S ribosomal RNA. The polypeptide is Small ribosomal subunit protein uS17 (Acidovorax ebreus (strain TPSY) (Diaphorobacter sp. (strain TPSY))).